Reading from the N-terminus, the 142-residue chain is Large-conductance mechanosensitive channel (142 aa).

Transmembrane regions (helical) follow at residues 15–35, 38–58, and 82–102; these read AFVM…GAAF, IVTS…IGNI, and GMFI…FVAI.

Belongs to the MscL family. As to quaternary structure, homopentamer.

It localises to the cell inner membrane. In terms of biological role, channel that opens in response to stretch forces in the membrane lipid bilayer. May participate in the regulation of osmotic pressure changes within the cell. The protein is Large-conductance mechanosensitive channel of Fusobacterium nucleatum subsp. nucleatum (strain ATCC 25586 / DSM 15643 / BCRC 10681 / CIP 101130 / JCM 8532 / KCTC 2640 / LMG 13131 / VPI 4355).